Here is an 831-residue protein sequence, read N- to C-terminus: Phenylalanine--tRNA ligase beta subunit (831 aa).

One can recognise a tRNA-binding domain in the interval 42–157 (ADISGPIVVG…GFAEPGTKAD (116 aa)). The B5 domain occupies 408-483 (VPREPIVVRA…RNEGYENIPA (76 aa)). Mg(2+) contacts are provided by Asp-461, Asp-467, Glu-470, and Glu-471. One can recognise an FDX-ACB domain in the interval 737–830 (STYPVATQDV…AAERTGAVLR (94 aa)).

This sequence belongs to the phenylalanyl-tRNA synthetase beta subunit family. Type 1 subfamily. Tetramer of two alpha and two beta subunits. Mg(2+) is required as a cofactor.

The protein localises to the cytoplasm. It carries out the reaction tRNA(Phe) + L-phenylalanine + ATP = L-phenylalanyl-tRNA(Phe) + AMP + diphosphate + H(+). The polypeptide is Phenylalanine--tRNA ligase beta subunit (Thermobifida fusca (strain YX)).